A 466-amino-acid polypeptide reads, in one-letter code: 3-isopropylmalate dehydratase large subunit (466 aa).

[4Fe-4S] cluster-binding residues include cysteine 347, cysteine 407, and cysteine 410.

Belongs to the aconitase/IPM isomerase family. LeuC type 1 subfamily. Heterodimer of LeuC and LeuD. [4Fe-4S] cluster is required as a cofactor.

The enzyme catalyses (2R,3S)-3-isopropylmalate = (2S)-2-isopropylmalate. It participates in amino-acid biosynthesis; L-leucine biosynthesis; L-leucine from 3-methyl-2-oxobutanoate: step 2/4. In terms of biological role, catalyzes the isomerization between 2-isopropylmalate and 3-isopropylmalate, via the formation of 2-isopropylmaleate. This is 3-isopropylmalate dehydratase large subunit from Solibacter usitatus (strain Ellin6076).